A 357-amino-acid chain; its full sequence is Probable butyrate kinase 1 (357 aa).

The protein belongs to the acetokinase family.

Its subcellular location is the cytoplasm. It carries out the reaction butanoate + ATP = butanoyl phosphate + ADP. The sequence is that of Probable butyrate kinase 1 from Caldanaerobacter subterraneus subsp. tengcongensis (strain DSM 15242 / JCM 11007 / NBRC 100824 / MB4) (Thermoanaerobacter tengcongensis).